Here is a 502-residue protein sequence, read N- to C-terminus: Type-2 serine--tRNA ligase (502 aa).

Residue Ala-304 coordinates L-serine. Cys-306 serves as a coordination point for Zn(2+). Arg-336 contacts L-serine. Residues 336–338 and 347–348 each bind ATP; these read RYE and RV. Residues 353–355 and Gln-400 each bind L-serine; that span reads RVE. Glu-355 contributes to the Zn(2+) binding site. Glu-432 lines the ATP pocket. Asn-435 serves as a coordination point for L-serine. A Zn(2+)-binding site is contributed by Cys-461. An ATP-binding site is contributed by Arg-468.

This sequence belongs to the class-II aminoacyl-tRNA synthetase family. Type-2 seryl-tRNA synthetase subfamily. In terms of assembly, homodimer. It depends on Zn(2+) as a cofactor.

The protein resides in the cytoplasm. It catalyses the reaction tRNA(Ser) + L-serine + ATP = L-seryl-tRNA(Ser) + AMP + diphosphate + H(+). The catalysed reaction is tRNA(Sec) + L-serine + ATP = L-seryl-tRNA(Sec) + AMP + diphosphate + H(+). The protein operates within aminoacyl-tRNA biosynthesis; selenocysteinyl-tRNA(Sec) biosynthesis; L-seryl-tRNA(Sec) from L-serine and tRNA(Sec): step 1/1. Functionally, catalyzes the attachment of serine to tRNA(Ser). Is also able to aminoacylate tRNA(Sec) with serine, to form the misacylated tRNA L-seryl-tRNA(Sec), which will be further converted into selenocysteinyl-tRNA(Sec). This is Type-2 serine--tRNA ligase from Methanococcoides burtonii (strain DSM 6242 / NBRC 107633 / OCM 468 / ACE-M).